The sequence spans 131 residues: Superoxide dismutase [Ni] (131 aa).

Positions 1-14 (MLSRLFAPKVTVSA) are excised as a propeptide. Residues His-15, Cys-16, and Cys-20 each contribute to the Ni(2+) site.

Belongs to the nickel superoxide dismutase family. As to quaternary structure, homohexamer. The hexameric protein has a roughly the shape of a hollow sphere with an outer diameter of 60 angstroms and a large interior cavity. Requires Ni(2+) as cofactor.

It localises to the cytoplasm. The enzyme catalyses 2 superoxide + 2 H(+) = H2O2 + O2. The polypeptide is Superoxide dismutase [Ni] (sodN) (Streptomyces coelicolor (strain ATCC BAA-471 / A3(2) / M145)).